Consider the following 116-residue polypeptide: Large ribosomal subunit protein bL19 (116 aa).

This sequence belongs to the bacterial ribosomal protein bL19 family.

This protein is located at the 30S-50S ribosomal subunit interface and may play a role in the structure and function of the aminoacyl-tRNA binding site. This is Large ribosomal subunit protein bL19 from Mycoplasma mobile (strain ATCC 43663 / 163K / NCTC 11711) (Mesomycoplasma mobile).